The following is a 286-amino-acid chain: Dolichyl-diphosphooligosaccharide--protein glycosyltransferase subunit SWP1 (286 aa).

The first 19 residues, 1–19, serve as a signal peptide directing secretion; that stretch reads MQFFKTLAALVSCISFVLA. Over 20–194 the chain is Lumenal; that stretch reads YVAQDVHVSF…HAEPKRVAKP (175 aa). A helical membrane pass occupies residues 195–215; the sequence is IAVIFVLIIFITILSLIVTWL. Topologically, residues 216 to 228 are cytoplasmic; sequence NSCAAAFNNIPTG. The chain crosses the membrane as a helical span at residues 229–249; that stretch reads VTAVYFLGFIATIVGFEVIFA. Over 250-252 the chain is Lumenal; it reads RYY. The chain crosses the membrane as a helical span at residues 253–273; it reads LGTSIFETLFSSLYLGAPGLL. Residues 274-286 are Cytoplasmic-facing; it reads TSTKFLRSFGQTI.

The protein belongs to the SWP1 family. In terms of assembly, component of the oligosaccharyltransferase (OST) complex, which appears to exist in two assemblies comprising OST1, OST2, OST4, OST5, STT3, SWP1, WPB1, and either OST3 or OST6. OST assembly occurs through the formation of 3 subcomplexes. Subcomplex 1 contains OST1 and OST5, subcomplex 2 contains STT3, OST3, and OST4, and subcomplex 3 contains OST2, WBP1, and SWP1. Interacts with SEC61 and SSS1.

The protein resides in the endoplasmic reticulum membrane. The protein operates within protein modification; protein glycosylation. Subunit of the oligosaccharyl transferase (OST) complex that catalyzes the initial transfer of a defined glycan (Glc(3)Man(9)GlcNAc(2) in eukaryotes) from the lipid carrier dolichol-pyrophosphate to an asparagine residue within an Asn-X-Ser/Thr consensus motif in nascent polypeptide chains, the first step in protein N-glycosylation. N-glycosylation occurs cotranslationally and the complex associates with the Sec61 complex at the channel-forming translocon complex that mediates protein translocation across the endoplasmic reticulum (ER). All subunits are required for a maximal enzyme activity. This is Dolichyl-diphosphooligosaccharide--protein glycosyltransferase subunit SWP1 (SWP1) from Saccharomyces cerevisiae (strain ATCC 204508 / S288c) (Baker's yeast).